The sequence spans 122 residues: ATP synthase epsilon chain (122 aa).

This sequence belongs to the ATPase epsilon chain family. In terms of assembly, F-type ATPases have 2 components, CF(1) - the catalytic core - and CF(0) - the membrane proton channel. CF(1) has five subunits: alpha(3), beta(3), gamma(1), delta(1), epsilon(1). CF(0) has three main subunits: a, b and c.

Its subcellular location is the cell membrane. In terms of biological role, produces ATP from ADP in the presence of a proton gradient across the membrane. In Rhodococcus opacus (strain B4), this protein is ATP synthase epsilon chain.